We begin with the raw amino-acid sequence, 422 residues long: Gamma-glutamyl phosphate reductase (422 aa).

This sequence belongs to the gamma-glutamyl phosphate reductase family.

Its subcellular location is the cytoplasm. It catalyses the reaction L-glutamate 5-semialdehyde + phosphate + NADP(+) = L-glutamyl 5-phosphate + NADPH + H(+). The protein operates within amino-acid biosynthesis; L-proline biosynthesis; L-glutamate 5-semialdehyde from L-glutamate: step 2/2. In terms of biological role, catalyzes the NADPH-dependent reduction of L-glutamate 5-phosphate into L-glutamate 5-semialdehyde and phosphate. The product spontaneously undergoes cyclization to form 1-pyrroline-5-carboxylate. This Chloroflexus aggregans (strain MD-66 / DSM 9485) protein is Gamma-glutamyl phosphate reductase.